Consider the following 206-residue polypeptide: Protein GrpE (206 aa).

Positions 1 to 17 (MSNESIKAEQDLIHEGV) are enriched in basic and acidic residues. The tract at residues 1–20 (MSNESIKAEQDLIHEGVESE) is disordered.

Belongs to the GrpE family. As to quaternary structure, homodimer.

It localises to the cytoplasm. Participates actively in the response to hyperosmotic and heat shock by preventing the aggregation of stress-denatured proteins, in association with DnaK and GrpE. It is the nucleotide exchange factor for DnaK and may function as a thermosensor. Unfolded proteins bind initially to DnaJ; upon interaction with the DnaJ-bound protein, DnaK hydrolyzes its bound ATP, resulting in the formation of a stable complex. GrpE releases ADP from DnaK; ATP binding to DnaK triggers the release of the substrate protein, thus completing the reaction cycle. Several rounds of ATP-dependent interactions between DnaJ, DnaK and GrpE are required for fully efficient folding. This chain is Protein GrpE, found in Shewanella oneidensis (strain ATCC 700550 / JCM 31522 / CIP 106686 / LMG 19005 / NCIMB 14063 / MR-1).